The primary structure comprises 325 residues: Probable cell division protein WhiA (325 aa).

The H-T-H motif DNA-binding region spans Ser-273–Lys-306.

It belongs to the WhiA family.

Involved in cell division and chromosome segregation. This Mycobacterium bovis (strain BCG / Tokyo 172 / ATCC 35737 / TMC 1019) protein is Probable cell division protein WhiA.